We begin with the raw amino-acid sequence, 817 residues long: Two pore calcium channel protein 1 (817 aa).

At 1–101 (MSVILDDDVL…PKDARALAAY (101 aa)) the chain is on the cytoplasmic side. Residues 22 to 66 (PLTPSNGLGQEDLPSKNGGGQSGPNSQVPSLVSGADSPPSSPPGH) form a disordered region. Residues 102–122 (LFVHNHFFYMMELLTALLLLL) traverse the membrane as a helical segment. Topologically, residues 123–137 (LSLCESPAVPALKLR) are extracellular. A helical transmembrane segment spans residues 138 to 158 (TYVHATLELFALMVVVFELCM). Over 159–172 (KLRWLGFHTFVRHK) the chain is Cytoplasmic. A helical membrane pass occupies residues 173 to 193 (RTMVKTSVLVVQFIEAIVVLV). Residues 194–202 (RQTSHVRVT) lie on the Extracellular side of the membrane. The chain crosses the membrane as a helical span at residues 203-221 (RALRCIFLVDCRYCGGVRR). Over 222–235 (NLRQIFQSLPPFMD) the chain is Cytoplasmic. The chain crosses the membrane as a helical span at residues 236-256 (ILLLLLFFMIIFAILGFYLFS). Topologically, residues 257-263 (TNPSDPY) are extracellular. The segment at residues 264-287 (FNTLENSIVNLFVLLTTANFPDVM) is an intramembrane region (helical; Pore-forming). Residues 288 to 298 (MPSYSRNPWSC) are Extracellular-facing. Residues 299-319 (VFFIVYLSIELYFIMNLLLAV) form a helical membrane-spanning segment. Topologically, residues 320 to 445 (VFDTFNDIEK…NILVNSKAFQ (126 aa)) are cytoplasmic. A helical membrane pass occupies residues 446–466 (YFMYLVVAVNGVWILVETFML). At 467–480 (KGGNFISKHVPWSY) the chain is on the extracellular side. Residues 481 to 501 (LVFLTIYGVELFMKVAGLGPV) traverse the membrane as a helical segment. Topologically, residues 502-504 (EYL) are cytoplasmic. Residues 505–527 (SSGWNLFDFSVTAFAFLGLLALT) form a helical membrane-spanning segment. Residues 528 to 535 (LNMEPFYF) lie on the Extracellular side of the membrane. The chain crosses the membrane as a helical span at residues 536 to 550 (IVVLRPLQLLRLFKL). Topologically, residues 551–574 (KKRYRNVLDTMFELLPRMASLGLT) are cytoplasmic. A helical transmembrane segment spans residues 575-595 (LLTFYYSFAIVGMEFFSGRLS). Over 596–630 (PNCCNSSTVADAYRFINHTVGNKTKVEEGYYYLNN) the chain is Extracellular. The helical; Pore-forming intramembrane region spans 631–654 (FDNILNSFVTLFELTVVNNWYIIM). At 655 to 671 (EGVTSQTSHWSRLYFMT) the chain is on the extracellular side. A helical membrane pass occupies residues 672–692 (FYIVTMVVMTIIVAFILEAFV). Topologically, residues 693-817 (FRMNYSRKSQ…GSRQRSQTVT (125 aa)) are cytoplasmic. Residues 770 to 794 (SLKMYQEEIQEWYEEHAREQEQQQL) are a coiled coil. Positions 785 to 817 (HAREQEQQQLRGSAPSPAAQQTPGSRQRSQTVT) are disordered. Residues 802–817 (AAQQTPGSRQRSQTVT) show a composition bias toward polar residues.

The protein belongs to the calcium channel alpha-1 subunit (TC 1.A.1.11) family. Two pore calcium channel subfamily. As to quaternary structure, dimer. Interacts with MTOR; the interaction is required for TPCN1 ATP sensitivity. Interacts with STX7, STX8 and STX12. Interacts with JPT2. Found in a complex with LSM12, TPCN1 and TPCN2. Post-translationally, N-glycosylated. As to expression, widely expressed. Expressed at relatively high level in kidney, liver and lung, and in the kidney it is expressed at inner medullary collecting ducts.

The protein localises to the lysosome membrane. The protein resides in the endosome membrane. It localises to the early endosome membrane. Its subcellular location is the recycling endosome membrane. The enzyme catalyses Na(+)(in) = Na(+)(out). It carries out the reaction Ca(2+)(in) = Ca(2+)(out). With respect to regulation, na(+) current is inhibited by ATP in a MTORC-dependent manner. ATP sensitivity is independent of PI(3,5)P2. Probably regulated by Mg(2+) ions, cytosolic Mg(2+) selectively inhibits outward current while lysosomal Mg(2+) modestly inhibits both the outward and inward currents. In the absence of Mg(2+), NAADP readily activates TPCN2, with properties similar to PI(3,5)P2. Both current elicited by PI(3,5)P2 as well as NAADP are inhibited by tetrandrine. In terms of biological role, intracellular channel initially characterized as a non-selective Ca(2+)-permeable channel activated by NAADP (nicotinic acid adenine dinucleotide phosphate), it is also a voltage-gated highly-selective Na(+) channel activated directly by PI(3,5)P2 (phosphatidylinositol 3,5-bisphosphate) that senses pH changes and confers electrical excitability to organelles. Localizes to the early and recycling endosomes membranes where it plays a role in the uptake and processing of proteins and regulates organellar membrane excitability, membrane trafficking and pH homeostasis. Ion selectivity is not fixed but rather agonist-dependent and under defined ionic conditions, can be readily activated by both NAADP and PI(3,5)P2. Required for mTOR-dependent nutrient sensing. The protein is Two pore calcium channel protein 1 (Tpcn1) of Rattus norvegicus (Rat).